The following is a 127-amino-acid chain: uncharacterized protein (127 aa).

The N-terminal stretch at 1-23 (MSKPLKFLLWSSLALLLLQIGSG) is a signal peptide.

This is an uncharacterized protein from Arabidopsis thaliana (Mouse-ear cress).